Here is a 611-residue protein sequence, read N- to C-terminus: MSKRVLTSVAWPYANGPRHIGHVAGFGVPSDVFARYQRMIGNDVLMVSGTDEHGTPLLVQADKENTTVRELADRYNRIIVEDLVGLGLSYDLFTRTTTRNHYAIVQELFRGLNENGYMLKQTTRGAVSPSTGRTLPDRYIEGTCPLCGATDARGDQCDNCGNQLDPADLIDPRSKINGETPEFVDTEHFMLDLPALAEALEEWLKGRNDWRPNVLKFSLNLLKDIRPRAMSRDIDWGVPVPIEGWQDNNAKKLYVWFDAVVGYLSASIEWAWRTGDPEAWRKWWNDPEAVSYYFMGKDNITFHSQIWPGEMLGYAGKGSKGGEQGELGELNLPTEVVSSEFLTMSGSKFSSSKGVVIYVRDFLKEFGPDALRYFIAVAGPENTDTDFTWDEFVRRINSELANEWGNLVNRTASMAHKNFGEIPQPGEFTAEDQALLDEAKQAYTVVGDALQLSKFKAGMTEAMRIAARANQYIAAQEPWKLAKDETQRERLATVLYVALQVVSDVNTLMTPYLPFSAQKVFETLGGEGIWAAQPEIVEVKDESPYTPVGVGLPEEGSSYPVIMGNYTEQKAIWQRTELAPGTALSKPKPLFQKLDPELAETGPEWAPVVKD.

Positions 12–22 (PYANGPRHIGH) match the 'HIGH' region motif. 4 residues coordinate Zn(2+): Cys-144, Cys-147, Cys-157, and Cys-160. Residues 348-352 (KFSSS) carry the 'KMSKS' region motif. Ser-351 contributes to the ATP binding site.

This sequence belongs to the class-I aminoacyl-tRNA synthetase family. MetG type 1 subfamily. As to quaternary structure, monomer. Zn(2+) is required as a cofactor.

It is found in the cytoplasm. The enzyme catalyses tRNA(Met) + L-methionine + ATP = L-methionyl-tRNA(Met) + AMP + diphosphate. Is required not only for elongation of protein synthesis but also for the initiation of all mRNA translation through initiator tRNA(fMet) aminoacylation. This is Methionine--tRNA ligase from Corynebacterium urealyticum (strain ATCC 43042 / DSM 7109).